The chain runs to 109 residues: Oncomodulin-2 (109 aa).

EF-hand domains lie at Met-39 to Gly-74 and Leu-78 to Ser-109. Asp-52, Asp-54, Ser-56, Tyr-58, Glu-63, Asp-91, Asp-93, Asp-95, Lys-97, and Glu-102 together coordinate Ca(2+).

It belongs to the parvalbumin family.

This Homo sapiens (Human) protein is Oncomodulin-2 (OCM2).